Consider the following 105-residue polypeptide: Nucleoid-associated protein ABC0038 (105 aa).

Residues 1–22 are compositionally biased toward low complexity; the sequence is MEMKNMGNMMKQMQKMQKQMMK. The tract at residues 1–26 is disordered; sequence MEMKNMGNMMKQMQKMQKQMMKAQEE.

Belongs to the YbaB/EbfC family. In terms of assembly, homodimer.

It is found in the cytoplasm. Its subcellular location is the nucleoid. Functionally, binds to DNA and alters its conformation. May be involved in regulation of gene expression, nucleoid organization and DNA protection. This chain is Nucleoid-associated protein ABC0038, found in Shouchella clausii (strain KSM-K16) (Alkalihalobacillus clausii).